The chain runs to 195 residues: Imidazoleglycerol-phosphate dehydratase (195 aa).

This sequence belongs to the imidazoleglycerol-phosphate dehydratase family.

The protein localises to the cytoplasm. It carries out the reaction D-erythro-1-(imidazol-4-yl)glycerol 3-phosphate = 3-(imidazol-4-yl)-2-oxopropyl phosphate + H2O. It participates in amino-acid biosynthesis; L-histidine biosynthesis; L-histidine from 5-phospho-alpha-D-ribose 1-diphosphate: step 6/9. This is Imidazoleglycerol-phosphate dehydratase from Dechloromonas aromatica (strain RCB).